We begin with the raw amino-acid sequence, 395 residues long: Bifunctional fatty acid conjugase/Delta(12)-oleate desaturase (395 aa).

The next 2 membrane-spanning stretches (helical) occupy residues 73 to 93 and 97 to 117; these read FALAFLFYHSAVTYIPLLPKP and MAWPVYWFLQGSNMLGIWVIA. Residues 118-122 carry the Histidine box-1 motif; that stretch reads HECGH. The helical transmembrane segment at 130–150 threads the bilayer; it reads WVNDAVGFFLHTSLLVPYFPF. A Histidine box-2 motif is present at residues 154–158; that stretch reads HRRHH. 3 helical membrane passes run 192 to 212, 236 to 256, and 264 to 284; these read VLTLTLTLLVGWPSYLAFNAS, FWVHVSNIGILAIYYILYRLA, and LLSIYGVPVLILNAFVVLITF. The Histidine box-3 motif lies at 328–332; it reads HVIHH.

This sequence belongs to the fatty acid desaturase type 1 family.

The protein resides in the membrane. It carries out the reaction a (9Z,12Z)-octadecadienoyl-containing glycerolipid + 2 Fe(II)-[cytochrome b5] + O2 + 2 H(+) = a (9Z,11E,13Z)-octadeca-9,11,13-trienoyl-containing glycerolipid + 2 Fe(III)-[cytochrome b5] + 2 H2O. Its pathway is lipid metabolism; polyunsaturated fatty acid biosynthesis. In terms of biological role, converts a single cis double bond at position 12 of linoleate incorporated into phosphatidylcholine into conjugated 11-trans and 13-cis double bonds. Produces punicic acid (18:3(9Z,11E,13Z)) from linoleic acid and conjugated octadecatetraenoic fatty acid from gamma-linolenic acid. No activity with cis- and trans-vaccenic acid, alpha-linolenic acid or homo-gamma-linolenic acid. 16:2(9Z,12Z), 18:3(9Z,12Z,15Z) and 18:2(9Z,12Z) are substrates for the conjugase to form trans-Delta(11) and cis-Delta(13) double bonds. No activity on the cis-Delta(9) double bonds of oleic and palmitoleic acids. This is Bifunctional fatty acid conjugase/Delta(12)-oleate desaturase from Punica granatum (Pomegranate).